The primary structure comprises 382 residues: Pyrimidine monooxygenase RutA (382 aa).

FMN-binding positions include 68 to 69 (IK), asparagine 134, glutamate 143, 159 to 160 (RY), and serine 209.

The protein belongs to the NtaA/SnaA/DszA monooxygenase family. RutA subfamily.

It catalyses the reaction uracil + FMNH2 + NADH + O2 = (Z)-3-ureidoacrylate + FMN + NAD(+) + H2O + H(+). The catalysed reaction is thymine + FMNH2 + NADH + O2 = (Z)-2-methylureidoacrylate + FMN + NAD(+) + H2O + H(+). Its function is as follows. Catalyzes the pyrimidine ring opening between N-3 and C-4 by an unusual flavin hydroperoxide-catalyzed mechanism, adding oxygen atoms in the process to yield ureidoacrylate peracid, that immediately reacts with FMN forming ureidoacrylate and FMN-N(5)-oxide. The FMN-N(5)-oxide reacts spontaneously with NADH to produce FMN. Requires the flavin reductase RutF to regenerate FMN in vivo. This is Pyrimidine monooxygenase RutA (rutA) from Escherichia coli O157:H7.